The chain runs to 156 residues: D-aminoacyl-tRNA deacylase (156 aa).

Residues 137–138 (GP) carry the Gly-cisPro motif, important for rejection of L-amino acids motif.

The protein belongs to the DTD family. Homodimer.

Its subcellular location is the cytoplasm. It catalyses the reaction glycyl-tRNA(Ala) + H2O = tRNA(Ala) + glycine + H(+). The enzyme catalyses a D-aminoacyl-tRNA + H2O = a tRNA + a D-alpha-amino acid + H(+). An aminoacyl-tRNA editing enzyme that deacylates mischarged D-aminoacyl-tRNAs. Also deacylates mischarged glycyl-tRNA(Ala), protecting cells against glycine mischarging by AlaRS. Acts via tRNA-based rather than protein-based catalysis; rejects L-amino acids rather than detecting D-amino acids in the active site. By recycling D-aminoacyl-tRNA to D-amino acids and free tRNA molecules, this enzyme counteracts the toxicity associated with the formation of D-aminoacyl-tRNA entities in vivo and helps enforce protein L-homochirality. In Dictyoglomus turgidum (strain DSM 6724 / Z-1310), this protein is D-aminoacyl-tRNA deacylase.